We begin with the raw amino-acid sequence, 214 residues long: Clavatol biosynthesis cluster protein B (214 aa).

An N-terminal signal peptide occupies residues methionine 1–alanine 17. Residues asparagine 103 and asparagine 204 are each glycosylated (N-linked (GlcNAc...) asparagine).

It participates in secondary metabolite biosynthesis. Its function is as follows. Part of the cla gene cluster that produces clavatol and ortho-quinone methide. The clavatol biosynthesis cluster cla and the terrestric acid cluster tra are both involved in the production of peniphenones and penilactones. The non-reducing PKS claF is responsible for the formation of clavatol from successive condensations of 3 malonyl-CoA units, presumably with a simple acetyl-CoA starter unit, and 2 methylation steps. The esterase claE probably collaborates with claF by catalyzing the hydrolysis of ACP-bound acyl intermediates to free the ACP from stalled intermediates. The clavatol oxidase claD then converts clavatol to hydroxyclavatol. Spontaneous dehydration of hydroxyclavatol leads to the accumulation of the highly active ortho-quinone methide. On the other hand, the PKS-NRPS hybrid traA is involved in the formation of crustosic acid, with the help of traB and traD. The polyketide synthase module (PKS) of traA is responsible for the synthesis of the polyketide backbone via the condensation of an acetyl-CoA starter unit with 3 malonyl-CoA units. The downstream nonribosomal peptide synthetase (NRPS) module then amidates the carboxyl end of the polyketide with L-malic acid. Because traA lacks a designated enoylreductase (ER) domain, the required activity is provided the enoyl reductase traG. Crustosic acid undergoes decarboxylation and isomerization to the terrestric acid, catalyzed by the 2-oxoglutarate-dependent dioxygenase traH. Both acids are further converted to the 2 gamma-butyrolactones (R)-5-methyltetronic acid and (S)-5-carboxylmethyltetronic acid, with involvement of the cytochrome P450 monooxygenase claJ. Spontaneous addition of the methide to these gamma-butyrolactones leads to peniphenone D and penilactone D, which undergo again stereospecific attacking by methide to give penilactones A and B. The function of claB has not been investigated yet. This Penicillium crustosum (Blue mold fungus) protein is Clavatol biosynthesis cluster protein B.